Reading from the N-terminus, the 280-residue chain is Phosphatidylserine decarboxylase proenzyme (280 aa).

Active-site charge relay system; for autoendoproteolytic cleavage activity residues include Asp-90, His-146, and Ser-247. Ser-247 (schiff-base intermediate with substrate; via pyruvic acid; for decarboxylase activity) is an active-site residue. The residue at position 247 (Ser-247) is a Pyruvic acid (Ser); by autocatalysis.

It belongs to the phosphatidylserine decarboxylase family. PSD-B subfamily. Prokaryotic type I sub-subfamily. Heterodimer of a large membrane-associated beta subunit and a small pyruvoyl-containing alpha subunit. Requires pyruvate as cofactor. Is synthesized initially as an inactive proenzyme. Formation of the active enzyme involves a self-maturation process in which the active site pyruvoyl group is generated from an internal serine residue via an autocatalytic post-translational modification. Two non-identical subunits are generated from the proenzyme in this reaction, and the pyruvate is formed at the N-terminus of the alpha chain, which is derived from the carboxyl end of the proenzyme. The autoendoproteolytic cleavage occurs by a canonical serine protease mechanism, in which the side chain hydroxyl group of the serine supplies its oxygen atom to form the C-terminus of the beta chain, while the remainder of the serine residue undergoes an oxidative deamination to produce ammonia and the pyruvoyl prosthetic group on the alpha chain. During this reaction, the Ser that is part of the protease active site of the proenzyme becomes the pyruvoyl prosthetic group, which constitutes an essential element of the active site of the mature decarboxylase.

The protein localises to the cell membrane. The catalysed reaction is a 1,2-diacyl-sn-glycero-3-phospho-L-serine + H(+) = a 1,2-diacyl-sn-glycero-3-phosphoethanolamine + CO2. Its pathway is phospholipid metabolism; phosphatidylethanolamine biosynthesis; phosphatidylethanolamine from CDP-diacylglycerol: step 2/2. Its function is as follows. Catalyzes the formation of phosphatidylethanolamine (PtdEtn) from phosphatidylserine (PtdSer). The chain is Phosphatidylserine decarboxylase proenzyme from Myxococcus xanthus (strain DK1622).